Here is a 361-residue protein sequence, read N- to C-terminus: Beta-hexosaminidase (361 aa).

Substrate-binding positions include aspartate 69, arginine 77, arginine 144, and 174-175 (KH). The active-site Proton donor/acceptor is histidine 187. Aspartate 258 acts as the Nucleophile in catalysis.

It belongs to the glycosyl hydrolase 3 family. NagZ subfamily.

It localises to the cytoplasm. It catalyses the reaction Hydrolysis of terminal non-reducing N-acetyl-D-hexosamine residues in N-acetyl-beta-D-hexosaminides.. It functions in the pathway cell wall biogenesis; peptidoglycan recycling. Functionally, plays a role in peptidoglycan recycling by cleaving the terminal beta-1,4-linked N-acetylglucosamine (GlcNAc) from peptide-linked peptidoglycan fragments, giving rise to free GlcNAc, anhydro-N-acetylmuramic acid and anhydro-N-acetylmuramic acid-linked peptides. The protein is Beta-hexosaminidase of Neisseria meningitidis serogroup C / serotype 2a (strain ATCC 700532 / DSM 15464 / FAM18).